The sequence spans 308 residues: Bifunctional protein FolD (308 aa).

Residues glycine 171 to serine 173, serine 198, and isoleucine 239 contribute to the NADP(+) site.

It belongs to the tetrahydrofolate dehydrogenase/cyclohydrolase family. As to quaternary structure, homodimer.

It carries out the reaction (6R)-5,10-methylene-5,6,7,8-tetrahydrofolate + NADP(+) = (6R)-5,10-methenyltetrahydrofolate + NADPH. It catalyses the reaction (6R)-5,10-methenyltetrahydrofolate + H2O = (6R)-10-formyltetrahydrofolate + H(+). Its pathway is one-carbon metabolism; tetrahydrofolate interconversion. Catalyzes the oxidation of 5,10-methylenetetrahydrofolate to 5,10-methenyltetrahydrofolate and then the hydrolysis of 5,10-methenyltetrahydrofolate to 10-formyltetrahydrofolate. The protein is Bifunctional protein FolD of Borreliella burgdorferi (strain ATCC 35210 / DSM 4680 / CIP 102532 / B31) (Borrelia burgdorferi).